A 243-amino-acid polypeptide reads, in one-letter code: DNA repair protein RecO (243 aa).

It belongs to the RecO family.

Involved in DNA repair and RecF pathway recombination. The protein is DNA repair protein RecO of Serratia proteamaculans (strain 568).